The primary structure comprises 132 residues: Small ribosomal subunit protein uS12 (132 aa).

Asp-89 carries the 3-methylthioaspartic acid modification. A disordered region spans residues 102–132; the sequence is LDTSGVADRKQSRSKYGAKVPKAGAAPAKKK. A compositionally biased stretch (low complexity) spans 118 to 132; it reads GAKVPKAGAAPAKKK.

Belongs to the universal ribosomal protein uS12 family. In terms of assembly, part of the 30S ribosomal subunit. Contacts proteins S8 and S17. May interact with IF1 in the 30S initiation complex.

With S4 and S5 plays an important role in translational accuracy. In terms of biological role, interacts with and stabilizes bases of the 16S rRNA that are involved in tRNA selection in the A site and with the mRNA backbone. Located at the interface of the 30S and 50S subunits, it traverses the body of the 30S subunit contacting proteins on the other side and probably holding the rRNA structure together. The combined cluster of proteins S8, S12 and S17 appears to hold together the shoulder and platform of the 30S subunit. This is Small ribosomal subunit protein uS12 from Chlorobaculum tepidum (strain ATCC 49652 / DSM 12025 / NBRC 103806 / TLS) (Chlorobium tepidum).